Here is a 173-residue protein sequence, read N- to C-terminus: MVRKPGSMYRNVRQRSFTRRKYMGGVPGSQVIHYDMGDKANTTFPVKISLVAEEKCQIRHTALEAARITANRHLVADAGKMGFYMKLRVYPHEVLRENKQATGAGADRVSSGMRRAFGKNVGTAARVNSMQKLFTVAVEKQNFPAAKKALWHAGQKLPTPVRIVIDEGAELVQ.

It belongs to the universal ribosomal protein uL16 family.

This is Large ribosomal subunit protein uL16 from Methanosarcina mazei (strain ATCC BAA-159 / DSM 3647 / Goe1 / Go1 / JCM 11833 / OCM 88) (Methanosarcina frisia).